A 65-amino-acid polypeptide reads, in one-letter code: Large ribosomal subunit protein bL33 (65 aa).

The interval 17–40 (SRSVPSSEKRSAGVSRYTTEKNRR) is disordered.

This sequence belongs to the bacterial ribosomal protein bL33 family.

The polypeptide is Large ribosomal subunit protein bL33 (Prochlorococcus marinus (strain NATL1A)).